A 220-amino-acid chain; its full sequence is Octanoyltransferase (220 aa).

In terms of domain architecture, BPL/LPL catalytic spans 29–217 (GRAPEMIWLL…CFEETFGPLP (189 aa)). Substrate contacts are provided by residues 68-75 (RGGQYTYH), 148-150 (AIG), and 161-163 (GLS). Residue C179 is the Acyl-thioester intermediate of the active site.

This sequence belongs to the LipB family.

The protein localises to the cytoplasm. It catalyses the reaction octanoyl-[ACP] + L-lysyl-[protein] = N(6)-octanoyl-L-lysyl-[protein] + holo-[ACP] + H(+). It participates in protein modification; protein lipoylation via endogenous pathway; protein N(6)-(lipoyl)lysine from octanoyl-[acyl-carrier-protein]: step 1/2. Its function is as follows. Catalyzes the transfer of endogenously produced octanoic acid from octanoyl-acyl-carrier-protein onto the lipoyl domains of lipoate-dependent enzymes. Lipoyl-ACP can also act as a substrate although octanoyl-ACP is likely to be the physiological substrate. In Dinoroseobacter shibae (strain DSM 16493 / NCIMB 14021 / DFL 12), this protein is Octanoyltransferase.